Reading from the N-terminus, the 712-residue chain is Elongation factor G (712 aa).

In terms of domain architecture, tr-type G spans 8–290 (TRYRNIGISA…AVIEFLPSPT (283 aa)). GTP contacts are provided by residues 17–24 (AHIDAGKT), 88–92 (DTPGH), and 142–145 (NKMD).

It belongs to the TRAFAC class translation factor GTPase superfamily. Classic translation factor GTPase family. EF-G/EF-2 subfamily.

The protein resides in the cytoplasm. In terms of biological role, catalyzes the GTP-dependent ribosomal translocation step during translation elongation. During this step, the ribosome changes from the pre-translocational (PRE) to the post-translocational (POST) state as the newly formed A-site-bound peptidyl-tRNA and P-site-bound deacylated tRNA move to the P and E sites, respectively. Catalyzes the coordinated movement of the two tRNA molecules, the mRNA and conformational changes in the ribosome. This chain is Elongation factor G, found in Acinetobacter baumannii (strain SDF).